The chain runs to 524 residues: Acetyl-CoA decarbonylase/synthase complex subunit beta (524 aa).

[Ni-Fe-S] cluster is bound by residues cysteine 212, cysteine 215, cysteine 301, and cysteine 303. The segment at 436–466 is disordered; sequence WVEEEEEEAEEVAEEAAAEAAPAAQPAQAAQ. The segment covering 437-452 has biased composition (acidic residues); sequence VEEEEEEAEEVAEEAA. Residues 453-466 show a composition bias toward low complexity; the sequence is AEAAPAAQPAQAAQ.

It belongs to the CdhC family. As to quaternary structure, monomer. The ACDS complex is made up of alpha, epsilon, beta, gamma and delta chains with a probable stoichiometry of (alpha(2)epsilon(2))(4)-beta(8)-(gamma(1)delta(1))(8). [Ni-Fe-S] cluster serves as cofactor.

The catalysed reaction is Co(I)-[corrinoid Fe-S protein] + acetyl-CoA + H(+) = methyl-Co(III)-[corrinoid Fe-S protein] + CO + CoA. Its function is as follows. Part of a complex that catalyzes the reversible cleavage of acetyl-CoA, allowing autotrophic growth from CO(2). The alpha-epsilon complex generates CO from CO(2), while the beta subunit (this protein) combines the CO with CoA and a methyl group to form acetyl-CoA. The methyl group, which is incorporated into acetyl-CoA, is transferred to the beta subunit by a corrinoid iron-sulfur protein (the gamma-delta complex). In Archaeoglobus fulgidus (strain ATCC 49558 / DSM 4304 / JCM 9628 / NBRC 100126 / VC-16), this protein is Acetyl-CoA decarbonylase/synthase complex subunit beta.